The chain runs to 297 residues: Ribosomal RNA small subunit methyltransferase H (297 aa).

S-adenosyl-L-methionine contacts are provided by residues 35-37 (GGH), aspartate 55, phenylalanine 82, aspartate 100, and glutamine 107.

This sequence belongs to the methyltransferase superfamily. RsmH family.

It localises to the cytoplasm. The enzyme catalyses cytidine(1402) in 16S rRNA + S-adenosyl-L-methionine = N(4)-methylcytidine(1402) in 16S rRNA + S-adenosyl-L-homocysteine + H(+). Its function is as follows. Specifically methylates the N4 position of cytidine in position 1402 (C1402) of 16S rRNA. The chain is Ribosomal RNA small subunit methyltransferase H from Chlamydia caviae (strain ATCC VR-813 / DSM 19441 / 03DC25 / GPIC) (Chlamydophila caviae).